Reading from the N-terminus, the 352-residue chain is MALNLKALLGMLFVFIGCCSNVVFLELIIQIDPGAGNLITFAQFLFIALEGLVFTSKFFTVRPKIALKDYVILVALFFGANVCNNYAFNFNIPMPLHMIFRSGSLMANMIMGIVLLKKRYNLRQYSSVAMITAGIILCTLVSSGDVKDNTHHSLKVDTSYSDFFWWTVGIGLLTIALLVTAYMGIYQEVIYKKYGKHPSEALFFTHMLPLPGFLIMAGNIVQHFGIAWSSEPVAVPLLGAIGLEWKFPLMLFYLLCNVVTQYVCISAVYVLTTECASLTVTLVVTLRKFVSLLFSIIYFRNPFTLNHWVGTILVFFGTILFANVINQVRDAYRARSSRKTHFDTAPLAKKVE.

The next 10 membrane-spanning stretches (helical) occupy residues 9 to 29 (LGML…ELII), 34 to 54 (GAGN…GLVF), 70 to 90 (YVIL…AFNF), 96 to 116 (LHMI…IVLL), 126 to 146 (SSVA…SGDV), 163 to 183 (FFWW…TAYM), 201 to 221 (ALFF…GNIV), 249 to 271 (LMLF…VYVL), 276 to 298 (ASLT…SIIY), and 305 to 325 (LNHW…ANVI). The Prevents secretion from ER signature appears at 350 to 352 (KVE).

The protein belongs to the nucleotide-sugar transporter family. SLC35B subfamily.

Its subcellular location is the endoplasmic reticulum membrane. Sugar transporter that specifically mediates the transport of UDP-N-acetylglucosamine (UDP-GlcNAc), GDP-fucose and UDP-xylose. Functions redundantly with Gfr in the O-fucosylation of Notch, positively regulating Notch signaling. Involved in the biosynthesis of heparan sulfate-glycosaminoglycan (HS-GAG) and in Dpp signaling in the wing imaginal disk. This Drosophila melanogaster (Fruit fly) protein is Endoplasmic reticulum GDP-fucose transporter.